The primary structure comprises 500 residues: L-arabinose isomerase (500 aa).

4 residues coordinate Mn(2+): Glu306, Glu333, His350, and His450.

The protein belongs to the arabinose isomerase family. As to quaternary structure, homohexamer. Mn(2+) serves as cofactor.

It catalyses the reaction beta-L-arabinopyranose = L-ribulose. It participates in carbohydrate degradation; L-arabinose degradation via L-ribulose; D-xylulose 5-phosphate from L-arabinose (bacterial route): step 1/3. In terms of biological role, catalyzes the conversion of L-arabinose to L-ribulose. The sequence is that of L-arabinose isomerase from Yersinia pseudotuberculosis serotype I (strain IP32953).